The primary structure comprises 507 residues: Sugar transport protein 6 (507 aa).

The Cytoplasmic portion of the chain corresponds to 1–20 (MAVVVSNANAPAFEAKMTVY). 12 helical membrane passes run 21–41 (VFIC…DIGI), 78–98 (FLQL…FVAS), 115–135 (IFFL…MLII), 138–158 (LFLG…LSEI), 165–185 (GGLN…ANIV), 199–219 (IALG…LLII), 280–300 (FIIG…AIMF), 318–338 (LSAV…IYLV), 345–365 (FLLL…GIIL), 381–401 (LVVV…WGPL), 418–438 (GFAV…QAFL), and 447–467 (GIFF…FFFI). Residues 468 to 507 (PETKGIAIDDMRESVWKPHWFWKRYMLPEDDHHDIEKRNA) are Cytoplasmic-facing.

It belongs to the major facilitator superfamily. Sugar transporter (TC 2.A.1.1) family. Pollen specific.

The protein resides in the membrane. Its activity is regulated as follows. Inhibited by uncouplers such as 2,4-dinitrophenol and carbonyl cyanide-m-chlorophenyl-hydrazone. Its function is as follows. Mediates an active uptake of hexoses, probably by sugar/hydrogen symport. Can transport glucose, 3-O-methylglucose, mannose, fructose and galactose, and, to a lower extent, xylose and ribulose. The chain is Sugar transport protein 6 (STP6) from Arabidopsis thaliana (Mouse-ear cress).